The primary structure comprises 517 residues: Enantioselective amidase (517 aa).

Catalysis depends on charge relay system residues Lys96 and Ser173. Ser197 serves as the catalytic Acyl-ester intermediate.

Belongs to the amidase family. As to quaternary structure, homooctamer.

It carries out the reaction a monocarboxylic acid amide + H2O = a monocarboxylate + NH4(+). In Rhodococcus rhodochrous, this protein is Enantioselective amidase (amdA).